A 434-amino-acid chain; its full sequence is MFS-type transporter AFUA_1G00970 (434 aa).

Helical transmembrane passes span 21–41 (VIGG…FGVF), 60–80 (WIGS…GVLV), 87–107 (VLLI…SLCS), 112–132 (IFLA…WPPF), 145–165 (LALG…SIMI), 182–202 (VLGF…TEPP), 240–260 (VFIS…NPFF), 278–298 (YMIS…GIVA), 301–321 (VGHY…SFCW), 327–347 (LTGL…ILSL), 364–384 (AIGF…PIGG), and 393–413 (LSLS…MGYA). A disordered region spans residues 201-225 (PPKQSQPQPRPALEATVEGGSASPT).

Belongs to the major facilitator superfamily. Monocarboxylate porter (TC 2.A.1.13) family.

The protein localises to the cell membrane. MFS-type transporter; part of the gene cluster that mediates the biosynthesis of fumigermin that inhibits germination of spores of the inducing S.rapamycinicus, and thus helps the fungus to defend resources in the shared habitat against a bacterial competitor. May be involved in the secretion of fumigermin. The chain is MFS-type transporter AFUA_1G00970 from Aspergillus fumigatus (strain ATCC MYA-4609 / CBS 101355 / FGSC A1100 / Af293) (Neosartorya fumigata).